The following is a 640-amino-acid chain: VQVSIGKCNHNPSDQWLDNISRWSNDRMPIDSIGIDLGLQTTQPYSINDTFKIGSPIGGMIYLRFDTTFTNSFYVTFYNVGRASIINYNITMNEEWNSVLKNAPGNVAEIRTPGNRLVFTSRHIRNLEDAQYISDYWLKAISISNYAVTLENIPITLNFDQRVDAGAAVAFVDRWFTQHPSDWASGCVNKEGLINSGNWGPLHEMNHHMQGPYLRGGNWGIKEPGEETNNVMTSINYILYTNIAGHRNQGLSGWNYVSDGYSTIYKILNGENDQPHLRSYVNIAHAFGTDTLIALVKSYYGLWYENNYEGEYSIKRDSTSAFCLLAAIATKRDTRYLCSLFKYDIQQNVSEAIKNMNYPTYYPFFNVYAMSYNGNYYGRTYKIPYGTTRLNFTATTAIDPSATSVSYTIKSGLTKGKLEQVEENVYDYTPNFGADENDTFVLNIDCIVNGEKVHIEQDGTFELDPHQVEYEVYKDVKTKDMEQALNTIQNKTSNYTGTSTFFDIGNYDDGTMQSMLVEKGKLIVPTSGYYTLFMKADDLGRLLLNVNGEYEQLLNVKTYLGGYSKTINGTYATVKLEKDTEYPFILYNLNTGGQGFIRIGYCYQGTDQSSVNVSKCSVLDIGSSMILNEKVKAGAKEPEF.

One can recognise a Peptidase M60 domain in the interval 1 to 288 (VQVSIGKCNH…SYVNIAHAFG (288 aa)). The PA14 domain maps to 463 to 615 (LDPHQVEYEV…TDQSSVNVSK (153 aa)).

This Entamoeba histolytica protein is Antigenic protein NP1.